The chain runs to 330 residues: Carbonic anhydrase (330 aa).

The tract at residues 1 to 109 is chloroplast transit peptide-like; the sequence is MSTASAFATN…AAARIDQITA (109 aa).

The protein belongs to the beta-class carbonic anhydrase family.

It localises to the cytoplasm. The enzyme catalyses hydrogencarbonate + H(+) = CO2 + H2O. Its function is as follows. Reversible hydration of carbon dioxide. The polypeptide is Carbonic anhydrase (Flaveria brownii (Brown's yellowtops)).